A 492-amino-acid polypeptide reads, in one-letter code: Steroid 21-hydroxylase (492 aa).

Heme b-binding residues include arginine 92 and lysine 121. Arginine 232 is a binding site for 17alpha-hydroxyprogesterone. Arginine 232 is a binding site for progesterone. The heme b site is built by histidine 364, arginine 425, and cysteine 427.

Belongs to the cytochrome P450 family. Heme b is required as a cofactor.

The protein localises to the endoplasmic reticulum membrane. It is found in the microsome membrane. It catalyses the reaction progesterone + reduced [NADPH--hemoprotein reductase] + O2 = 21-hydroxyprogesterone + oxidized [NADPH--hemoprotein reductase] + H2O + H(+). The enzyme catalyses 17alpha-hydroxyprogesterone + reduced [NADPH--hemoprotein reductase] + O2 = 11-deoxycortisol + oxidized [NADPH--hemoprotein reductase] + H2O + H(+). Its function is as follows. A cytochrome P450 monooxygenase that plays a major role in adrenal steroidogenesis. Catalyzes the hydroxylation at C-21 of progesterone and 17alpha-hydroxyprogesterone to respectively form 11-deoxycorticosterone and 11-deoxycortisol, intermediate metabolites in the biosynthetic pathway of mineralocorticoids and glucocorticoids. Mechanistically, uses molecular oxygen inserting one oxygen atom into a substrate, and reducing the second into a water molecule, with two electrons provided by NADPH via cytochrome P450 reductase (CPR; NADPH-ferrihemoprotein reductase). The sequence is that of Steroid 21-hydroxylase (CYP21) from Sus scrofa (Pig).